The sequence spans 380 residues: 3-isopropylmalate dehydratase large subunit (380 aa).

[4Fe-4S] cluster is bound by residues cysteine 262, cysteine 320, and cysteine 323.

It belongs to the aconitase/IPM isomerase family. LeuC type 2 subfamily. In terms of assembly, heterodimer of LeuC and LeuD. Requires [4Fe-4S] cluster as cofactor.

It carries out the reaction (2R,3S)-3-isopropylmalate = (2S)-2-isopropylmalate. Its pathway is amino-acid biosynthesis; L-leucine biosynthesis; L-leucine from 3-methyl-2-oxobutanoate: step 2/4. In terms of biological role, catalyzes the isomerization between 2-isopropylmalate and 3-isopropylmalate, via the formation of 2-isopropylmaleate. This chain is 3-isopropylmalate dehydratase large subunit, found in Thermococcus kodakarensis (strain ATCC BAA-918 / JCM 12380 / KOD1) (Pyrococcus kodakaraensis (strain KOD1)).